Consider the following 223-residue polypeptide: MGQKINPTGFRVGVIRDWDAKWFADKADYANQLHEDLRIRKYIEKNLADASVDRIEIERTTKSRVDVSIQTAKPGMVIGKGGSEVEKLRTQLAKLTDTDEKGRSKRVFINIVEIKKPDLSAHLVGQQIAGDLERRVAFRRAMRGAIQRATRSGAKGIKVMVSGRLNGADIARIEQYTEGTVPLHTLRADIDYSWDEAMTAYGNLGIKTWIYRGDVLPQKKNSK.

Positions isoleucine 39–lysine 115 constitute a KH type-2 domain.

It belongs to the universal ribosomal protein uS3 family. Part of the 30S ribosomal subunit. Forms a tight complex with proteins S10 and S14.

Its function is as follows. Binds the lower part of the 30S subunit head. Binds mRNA in the 70S ribosome, positioning it for translation. This is Small ribosomal subunit protein uS3 from Leuconostoc mesenteroides subsp. mesenteroides (strain ATCC 8293 / DSM 20343 / BCRC 11652 / CCM 1803 / JCM 6124 / NCDO 523 / NBRC 100496 / NCIMB 8023 / NCTC 12954 / NRRL B-1118 / 37Y).